Reading from the N-terminus, the 502-residue chain is Glycerol kinase (502 aa).

An ADP-binding site is contributed by T14. Residues T14, T15, and S16 each coordinate ATP. T14 contributes to the sn-glycerol 3-phosphate binding site. R18 serves as a coordination point for ADP. 4 residues coordinate sn-glycerol 3-phosphate: R84, E85, Y136, and D246. The glycerol site is built by R84, E85, Y136, D246, and Q247. Positions 268 and 311 each coordinate ADP. ATP is bound by residues T268, G311, Q315, and G412. The ADP site is built by G412 and N416.

Belongs to the FGGY kinase family. Homotetramer and homodimer (in equilibrium). Heterodimer with EIIA-Glc. Binds 1 zinc ion per glycerol kinase EIIA-Glc dimer. The zinc ion is important for dimerization.

The catalysed reaction is glycerol + ATP = sn-glycerol 3-phosphate + ADP + H(+). Its pathway is polyol metabolism; glycerol degradation via glycerol kinase pathway; sn-glycerol 3-phosphate from glycerol: step 1/1. Activity of this regulatory enzyme is affected by several metabolites. Allosterically and non-competitively inhibited by fructose 1,6-bisphosphate (FBP) and unphosphorylated phosphocarrier protein EIIA-Glc (III-Glc), an integral component of the bacterial phosphotransferase (PTS) system. Functionally, key enzyme in the regulation of glycerol uptake and metabolism. Catalyzes the phosphorylation of glycerol to yield sn-glycerol 3-phosphate. This is Glycerol kinase from Salmonella heidelberg (strain SL476).